The following is a 185-amino-acid chain: NOP protein chaperone 1 (185 aa).

A disordered region spans residues M1–I40. Low complexity predominate over residues S10–S21. S34 and S66 each carry phosphoserine. The interval F118–K185 is disordered. The segment covering S143–I152 has biased composition (acidic residues). A Phosphoserine modification is found at S178.

In terms of assembly, interacts with NOP58, RUVBL1 and RUVBL2; the interactions are direct and NOPCHAP1 bridges the association of NOP58 with RUVBL1:RUVBL2 even in absence of snoRNAs. The interactions with RUVBL1 and RUVBL2 are disrupted upon ATP binding.

Its subcellular location is the nucleus. In terms of biological role, client-loading PAQosome/R2TP complex cofactor that selects NOP58 to promote box C/D small nucleolar ribonucleoprotein (snoRNP) assembly. Acts as a bridge between NOP58 and the R2TP complex via RUVBL1:RUVBL2. The chain is NOP protein chaperone 1 from Homo sapiens (Human).